We begin with the raw amino-acid sequence, 88 residues long: Small ribosomal subunit protein bS20 (88 aa).

Belongs to the bacterial ribosomal protein bS20 family.

In terms of biological role, binds directly to 16S ribosomal RNA. The protein is Small ribosomal subunit protein bS20 of Clostridium botulinum (strain ATCC 19397 / Type A).